Reading from the N-terminus, the 246-residue chain is Octanoyltransferase (246 aa).

The BPL/LPL catalytic domain maps to 46–234; the sequence is GTAGEMVWLV…AFEEVFGAAE (189 aa). Substrate contacts are provided by residues 85-92, 165-167, and 178-180; these read RGGEYTYH, AIG, and GIA. Residue Cys196 is the Acyl-thioester intermediate of the active site.

The protein belongs to the LipB family.

Its subcellular location is the cytoplasm. The enzyme catalyses octanoyl-[ACP] + L-lysyl-[protein] = N(6)-octanoyl-L-lysyl-[protein] + holo-[ACP] + H(+). The protein operates within protein modification; protein lipoylation via endogenous pathway; protein N(6)-(lipoyl)lysine from octanoyl-[acyl-carrier-protein]: step 1/2. Catalyzes the transfer of endogenously produced octanoic acid from octanoyl-acyl-carrier-protein onto the lipoyl domains of lipoate-dependent enzymes. Lipoyl-ACP can also act as a substrate although octanoyl-ACP is likely to be the physiological substrate. The sequence is that of Octanoyltransferase from Chelativorans sp. (strain BNC1).